The chain runs to 443 residues: ATP-dependent protease ATPase subunit HslU (443 aa).

ATP is bound by residues I18, 60–65, D256, E321, and R393; that span reads GVGKTE.

This sequence belongs to the ClpX chaperone family. HslU subfamily. As to quaternary structure, a double ring-shaped homohexamer of HslV is capped on each side by a ring-shaped HslU homohexamer. The assembly of the HslU/HslV complex is dependent on binding of ATP.

It localises to the cytoplasm. Its function is as follows. ATPase subunit of a proteasome-like degradation complex; this subunit has chaperone activity. The binding of ATP and its subsequent hydrolysis by HslU are essential for unfolding of protein substrates subsequently hydrolyzed by HslV. HslU recognizes the N-terminal part of its protein substrates and unfolds these before they are guided to HslV for hydrolysis. In Escherichia coli O157:H7 (strain EC4115 / EHEC), this protein is ATP-dependent protease ATPase subunit HslU.